The primary structure comprises 239 residues: Ribosomal RNA small subunit methyltransferase G (239 aa).

S-adenosyl-L-methionine is bound by residues Gly-78, Phe-83, 129-130, and Arg-148; that span reads AE.

Belongs to the methyltransferase superfamily. RNA methyltransferase RsmG family.

It is found in the cytoplasm. Specifically methylates the N7 position of a guanine in 16S rRNA. The sequence is that of Ribosomal RNA small subunit methyltransferase G from Clostridium perfringens (strain 13 / Type A).